A 283-amino-acid chain; its full sequence is Bifunctional protein FolD (283 aa).

166-168 (GAS) is an NADP(+) binding site.

This sequence belongs to the tetrahydrofolate dehydrogenase/cyclohydrolase family. As to quaternary structure, homodimer.

The enzyme catalyses (6R)-5,10-methylene-5,6,7,8-tetrahydrofolate + NADP(+) = (6R)-5,10-methenyltetrahydrofolate + NADPH. The catalysed reaction is (6R)-5,10-methenyltetrahydrofolate + H2O = (6R)-10-formyltetrahydrofolate + H(+). It functions in the pathway one-carbon metabolism; tetrahydrofolate interconversion. Functionally, catalyzes the oxidation of 5,10-methylenetetrahydrofolate to 5,10-methenyltetrahydrofolate and then the hydrolysis of 5,10-methenyltetrahydrofolate to 10-formyltetrahydrofolate. In Coxiella burnetii (strain CbuG_Q212) (Coxiella burnetii (strain Q212)), this protein is Bifunctional protein FolD.